The chain runs to 459 residues: MSNFAIILAAGKGTRMKSDLPKVLHKVAGISMLEHVFRSVGAIQPEKTVTVVGHKAELVEEVLAGQTEFVTQSEQLGTGHAVMMTEPILEGLSGHTLVIAGDTPLITGESLKNLIDFHINHKNVATILTAETDNPFGYGRIVRNDNAEVLRIVEQKDATDFEKQIKEINTGTYVFDNERLFEALKNINTNNAQGEYYITDVIGIFRETGEKVGAYTLKDFDESLGVNDRVALATAESVMRRRINHKHMVNGVSFVNPEATYIDIDVEIASEVQIEANVTLKGQTKIGAETVLTNGTYVVDSTIGAGAVITNSMIEESSVADGVIVGPYAHIRPNSSLGAQVHIGNFVEVKGSSIGENTKAGHLTYIGNCEVGSNVNFGAGTITVNYDGKNKYKTVIGNNVFVGSNSTIIAPVELGDNSLVGAGSTITKDVPADAIAIGRGRQINKDEYATRLPHHPKNQ.

The interval 1 to 229 (MSNFAIILAA…FDESLGVNDR (229 aa)) is pyrophosphorylase. Residues 8–11 (LAAG), Lys-22, Gln-72, 77–78 (GT), 101–102 (GD), Gly-139, Glu-154, Asn-169, and Asn-227 each bind UDP-N-acetyl-alpha-D-glucosamine. Asp-102 serves as a coordination point for Ca(2+). Asp-102 lines the Mg(2+) pocket. Asn-227 serves as a coordination point for Ca(2+). Asn-227 lines the Mg(2+) pocket. A linker region spans residues 230 to 250 (VALATAESVMRRRINHKHMVN). Positions 251–459 (GVSFVNPEAT…TRLPHHPKNQ (209 aa)) are N-acetyltransferase. Arg-332 and Lys-350 together coordinate UDP-N-acetyl-alpha-D-glucosamine. Catalysis depends on His-362, which acts as the Proton acceptor. UDP-N-acetyl-alpha-D-glucosamine-binding residues include Tyr-365 and Asn-376. Residues Ala-379, 385-386 (NY), Ser-404, Ala-422, and Arg-439 each bind acetyl-CoA.

It in the N-terminal section; belongs to the N-acetylglucosamine-1-phosphate uridyltransferase family. In the C-terminal section; belongs to the transferase hexapeptide repeat family. Homotrimer. It depends on Mg(2+) as a cofactor. Requires Ca(2+) as cofactor.

Its subcellular location is the cytoplasm. The catalysed reaction is alpha-D-glucosamine 1-phosphate + acetyl-CoA = N-acetyl-alpha-D-glucosamine 1-phosphate + CoA + H(+). The enzyme catalyses N-acetyl-alpha-D-glucosamine 1-phosphate + UTP + H(+) = UDP-N-acetyl-alpha-D-glucosamine + diphosphate. It functions in the pathway nucleotide-sugar biosynthesis; UDP-N-acetyl-alpha-D-glucosamine biosynthesis; N-acetyl-alpha-D-glucosamine 1-phosphate from alpha-D-glucosamine 6-phosphate (route II): step 2/2. It participates in nucleotide-sugar biosynthesis; UDP-N-acetyl-alpha-D-glucosamine biosynthesis; UDP-N-acetyl-alpha-D-glucosamine from N-acetyl-alpha-D-glucosamine 1-phosphate: step 1/1. The protein operates within bacterial outer membrane biogenesis; LPS lipid A biosynthesis. In terms of biological role, catalyzes the last two sequential reactions in the de novo biosynthetic pathway for UDP-N-acetylglucosamine (UDP-GlcNAc). The C-terminal domain catalyzes the transfer of acetyl group from acetyl coenzyme A to glucosamine-1-phosphate (GlcN-1-P) to produce N-acetylglucosamine-1-phosphate (GlcNAc-1-P), which is converted into UDP-GlcNAc by the transfer of uridine 5-monophosphate (from uridine 5-triphosphate), a reaction catalyzed by the N-terminal domain. The sequence is that of Bifunctional protein GlmU from Streptococcus pneumoniae serotype 4 (strain ATCC BAA-334 / TIGR4).